A 380-amino-acid chain; its full sequence is Cobalt-precorrin-5B C(1)-methyltransferase (380 aa).

This sequence belongs to the CbiD family.

The catalysed reaction is Co-precorrin-5B + S-adenosyl-L-methionine = Co-precorrin-6A + S-adenosyl-L-homocysteine. It functions in the pathway cofactor biosynthesis; adenosylcobalamin biosynthesis; cob(II)yrinate a,c-diamide from sirohydrochlorin (anaerobic route): step 6/10. Functionally, catalyzes the methylation of C-1 in cobalt-precorrin-5B to form cobalt-precorrin-6A. This Salinispora tropica (strain ATCC BAA-916 / DSM 44818 / JCM 13857 / NBRC 105044 / CNB-440) protein is Cobalt-precorrin-5B C(1)-methyltransferase.